The sequence spans 341 residues: Glyceraldehyde-3-phosphate dehydrogenase 2 (341 aa).

NAD(+) contacts are provided by residues 13-14 (RI), aspartate 35, and arginine 85. Residues 157 to 159 (SCT), threonine 188, 217 to 218 (TG), and arginine 240 each bind D-glyceraldehyde 3-phosphate. Cysteine 158 functions as the Nucleophile in the catalytic mechanism. Asparagine 322 provides a ligand contact to NAD(+).

Belongs to the glyceraldehyde-3-phosphate dehydrogenase family. As to quaternary structure, homotetramer.

The protein resides in the cytoplasm. It catalyses the reaction D-glyceraldehyde 3-phosphate + phosphate + NAD(+) = (2R)-3-phospho-glyceroyl phosphate + NADH + H(+). The protein operates within carbohydrate degradation; glycolysis; pyruvate from D-glyceraldehyde 3-phosphate: step 1/5. This is Glyceraldehyde-3-phosphate dehydrogenase 2 (gpd-2) from Caenorhabditis elegans.